The primary structure comprises 364 residues: DNA polymerase IV (364 aa).

The region spanning 14–198 (IIHIDMDAFF…LPIEKFHGVG (185 aa)) is the UmuC domain. The Mg(2+) site is built by Asp-18 and Asp-116. Residue Glu-117 is part of the active site.

This sequence belongs to the DNA polymerase type-Y family. As to quaternary structure, monomer. Mg(2+) serves as cofactor.

It is found in the cytoplasm. It catalyses the reaction DNA(n) + a 2'-deoxyribonucleoside 5'-triphosphate = DNA(n+1) + diphosphate. In terms of biological role, poorly processive, error-prone DNA polymerase involved in untargeted mutagenesis. Copies undamaged DNA at stalled replication forks, which arise in vivo from mismatched or misaligned primer ends. These misaligned primers can be extended by PolIV. Exhibits no 3'-5' exonuclease (proofreading) activity. May be involved in translesional synthesis, in conjunction with the beta clamp from PolIII. In Streptococcus pyogenes serotype M1, this protein is DNA polymerase IV.